A 192-amino-acid polypeptide reads, in one-letter code: Ion-translocating oxidoreductase complex subunit B (192 aa).

The hydrophobic stretch occupies residues 1-26; the sequence is MNAIWIAVAAVSLLGLAFGAILGYAS. The 60-residue stretch at 32 to 91 folds into the 4Fe-4S domain; it reads EDDPVVEKIDEILPQSQCGQCGYPGCRPYAEAISCNGEKINRCAPGGEAVMLKIAELLNV. Residues Cys-49, Cys-52, Cys-57, Cys-74, Cys-117, Cys-120, Cys-123, Cys-127, Cys-147, Cys-150, Cys-153, and Cys-157 each coordinate [4Fe-4S] cluster. 4Fe-4S ferredoxin-type domains follow at residues 108–137 and 138–167; these read MVAV…GATR and AMHT…LQPV.

This sequence belongs to the 4Fe4S bacterial-type ferredoxin family. RnfB subfamily. As to quaternary structure, the complex is composed of six subunits: RsxA, RsxB, RsxC, RsxD, RsxE and RsxG. It depends on [4Fe-4S] cluster as a cofactor.

It is found in the cell inner membrane. In terms of biological role, part of a membrane-bound complex that couples electron transfer with translocation of ions across the membrane. Required to maintain the reduced state of SoxR. The polypeptide is Ion-translocating oxidoreductase complex subunit B (Shigella dysenteriae serotype 1 (strain Sd197)).